We begin with the raw amino-acid sequence, 857 residues long: Putative serine/threonine-protein kinase receptor (857 aa).

The signal sequence occupies residues 1–32 (MKGARNIYHHSYMSFLLVFVVMILIHPALSIY). The Extracellular portion of the chain corresponds to 33–446 (INTLSSTESL…IAKKRNASGK (414 aa)). Residues 35-155 (TLSSTESLTI…SNNDASEYLW (121 aa)) form the Bulb-type lectin domain. 6 N-linked (GlcNAc...) asparagine glycosylation sites follow: Asn-47, Asn-120, Asn-196, Asn-260, Asn-389, and Asn-442. Residues 350-433 (CSGDGFTRMK…DGQDLYVRLA (84 aa)) enclose the PAN domain. Disulfide bonds link Cys-380-Cys-405 and Cys-388-Cys-390. The chain crosses the membrane as a helical span at residues 447–466 (IISLTVGVSVLLLLIMFCLW). Topologically, residues 467-857 (KRKQKRAKAS…QYTCSVIDAR (391 aa)) are cytoplasmic. The region spanning 528–779 (FSSCNKLGQG…PSIFQPQEVL (252 aa)) is the Protein kinase domain. ATP contacts are provided by residues 534-542 (LGQGGFGIV) and Lys-556. Asp-653 serves as the catalytic Proton acceptor.

Belongs to the protein kinase superfamily. Ser/Thr protein kinase family. As to expression, predominantly in the pistil and anther.

It is found in the membrane. The catalysed reaction is L-seryl-[protein] + ATP = O-phospho-L-seryl-[protein] + ADP + H(+). The enzyme catalyses L-threonyl-[protein] + ATP = O-phospho-L-threonyl-[protein] + ADP + H(+). Involved in sporophytic self-incompatibility system (the inability of flowering plants to achieve self-fertilization), probably acting in combination with S-locus-specific glycoproteins. Interaction with a ligand in the extracellular domain triggers the protein kinase activity of the cytoplasmic domain. This chain is Putative serine/threonine-protein kinase receptor (SRK6), found in Brassica oleracea var. viridis (Flowering kale).